Here is a 325-residue protein sequence, read N- to C-terminus: Acetyl-coenzyme A carboxylase carboxyl transferase subunit alpha (325 aa).

The CoA carboxyltransferase C-terminal domain occupies 35–292; it reads EIEKLEARLA…DKVLKRSLKQ (258 aa).

It belongs to the AccA family. As to quaternary structure, acetyl-CoA carboxylase is a heterohexamer composed of biotin carboxyl carrier protein (AccB), biotin carboxylase (AccC) and two subunits each of ACCase subunit alpha (AccA) and ACCase subunit beta (AccD).

It is found in the cytoplasm. It carries out the reaction N(6)-carboxybiotinyl-L-lysyl-[protein] + acetyl-CoA = N(6)-biotinyl-L-lysyl-[protein] + malonyl-CoA. It functions in the pathway lipid metabolism; malonyl-CoA biosynthesis; malonyl-CoA from acetyl-CoA: step 1/1. Functionally, component of the acetyl coenzyme A carboxylase (ACC) complex. First, biotin carboxylase catalyzes the carboxylation of biotin on its carrier protein (BCCP) and then the CO(2) group is transferred by the carboxyltransferase to acetyl-CoA to form malonyl-CoA. In Geobacillus sp. (strain WCH70), this protein is Acetyl-coenzyme A carboxylase carboxyl transferase subunit alpha.